The following is a 306-amino-acid chain: Homoserine O-succinyltransferase (306 aa).

The active-site Acyl-thioester intermediate is cysteine 142. Lysine 163 and serine 192 together coordinate substrate. The active-site Proton acceptor is histidine 233. Residue glutamate 235 is part of the active site. Residue arginine 247 participates in substrate binding.

It belongs to the MetA family.

It localises to the cytoplasm. The catalysed reaction is L-homoserine + succinyl-CoA = O-succinyl-L-homoserine + CoA. Its pathway is amino-acid biosynthesis; L-methionine biosynthesis via de novo pathway; O-succinyl-L-homoserine from L-homoserine: step 1/1. Functionally, transfers a succinyl group from succinyl-CoA to L-homoserine, forming succinyl-L-homoserine. In Pelagibacterium halotolerans (strain DSM 22347 / JCM 15775 / CGMCC 1.7692 / B2), this protein is Homoserine O-succinyltransferase.